Reading from the N-terminus, the 266-residue chain is Gasdermin bGSDM (266 aa).

Cys-3 carries S-palmitoyl cysteine lipidation. The next 4 membrane-spanning stretches (beta stranded) occupy residues 69 to 85 (ISGQRTGDLSVGVGLSI), 97 to 115 (KLGLDTKYQNAKTTMFEFQ), 163 to 180 (KFTIEAKKSDGTALELTI), and 189 to 205 (GNVKVSGAASVTSKICY).

The protein belongs to the bacterial gasdermin family. As to quaternary structure, monomer. Forms large, homooligomeric ring-shaped pores when inserted in membranes. In terms of processing, palmitoylation helps stabilize the inactive state; may self palmitoylate. Palmitoylation plays a significant role in pore formation.

The protein localises to the cytoplasm. It localises to the cell inner membrane. The full-length protein before cleavage is inactive: intramolecular interactions between the N-terminal domain and the C-terminal region as well as the lipid modification, mediate autoinhibition. The pyroptosis-like-inducing activity is carried by the released N-terminal domain (Gasdermin bGSDM, N-terminus). Functionally, precursor of a pore-forming protein involved in defense against bacteriophages. Expression of bGSDM and the neighboring protease gene (Ga0182885_104520) is toxic in E.coli. Cleavage of this precursor by its dedicated protease releases the active moiety (gasdermin bGSDM, N-terminus) which inserts into membranes, forming pores and triggering cell death. In terms of biological role, pore-forming protein that causes membrane permeabilization via a pyroptosis-like activity. Makes ring-like pores when released. This chain is Gasdermin bGSDM, found in Desulfuromonadales bacterium.